Here is a 540-residue protein sequence, read N- to C-terminus: DM7 family protein GD24576 (540 aa).

Residues Ala-416 to Asp-443 form a disordered region. The segment covering Thr-417 to Asp-443 has biased composition (basic and acidic residues).

This sequence belongs to the DM7 family.

The sequence is that of DM7 family protein GD24576 from Drosophila simulans (Fruit fly).